A 421-amino-acid chain; its full sequence is Na(+)/H(+) antiporter NhaA 1 (421 aa).

Helical transmembrane passes span 48-68 (SSGL…NSPW), 93-113 (LYWW…GLEI), 129-149 (SLAL…YTLV), 157-177 (AGWG…LALL), 187-207 (VLLA…IALF), 215-235 (LALG…AAGV), 253-273 (LASG…IPLG), 299-319 (FLIL…GGSL), 326-346 (VVLG…WLAV), 364-384 (GLGL…GLAF), and 392-412 (AAKL…ITVL).

Belongs to the NhaA Na(+)/H(+) (TC 2.A.33) antiporter family.

Its subcellular location is the cell membrane. The enzyme catalyses Na(+)(in) + 2 H(+)(out) = Na(+)(out) + 2 H(+)(in). In terms of biological role, na(+)/H(+) antiporter that extrudes sodium in exchange for external protons. This chain is Na(+)/H(+) antiporter NhaA 1, found in Deinococcus geothermalis (strain DSM 11300 / CIP 105573 / AG-3a).